We begin with the raw amino-acid sequence, 261 residues long: Probable membrane transporter protein PD_1894 (261 aa).

Transmembrane regions (helical) follow at residues 6–26 (LIVT…LGGG), 45–64 (HIAI…ANLI), 78–98 (VIFA…GMLI), 99–119 (DGQR…LLML), 150–170 (AASG…LIFA), 175–195 (TINA…ITTL), 205–225 (WTIA…GTLL), and 239–259 (VFGL…WASL).

This sequence belongs to the 4-toluene sulfonate uptake permease (TSUP) (TC 2.A.102) family.

The protein localises to the cell membrane. This Xylella fastidiosa (strain Temecula1 / ATCC 700964) protein is Probable membrane transporter protein PD_1894.